We begin with the raw amino-acid sequence, 254 residues long: rRNA N-glycosylase sapovaccarin-S2 (254 aa).

This sequence belongs to the ribosome-inactivating protein family. Type 1 RIP subfamily. In terms of tissue distribution, expressed in seeds; most abundant in the perisperm.

The catalysed reaction is Endohydrolysis of the N-glycosidic bond at one specific adenosine on the 28S rRNA.. In terms of biological role, exhibits N-glycosylase activity. Catalyzes the release of one adenine from a ribosome. Acts as a ribosome-inactivating protein and inhibits protein synthesis. Induces cell death in Huh-7 liver cells. May contribute to the protection against plant pests and predators or play a role in regulating the death of plant cells. This is rRNA N-glycosylase sapovaccarin-S2 from Gypsophila vaccaria (Cow soapwort).